A 349-amino-acid polypeptide reads, in one-letter code: Mitochondrial carrier protein SCaMC-3L (349 aa).

4 helical membrane-spanning segments follow: residues 88–104 (GALW…GAVS), 149–168 (GNGI…FSVF), 188–205 (LLAG…INPM), and 243–261 (YLPN…LAVY). 2 Solcar repeats span residues 88–174 (GALW…CKNY) and 182–267 (PPFQ…LNCL).

Belongs to the mitochondrial carrier (TC 2.A.29) family.

The protein localises to the mitochondrion inner membrane. It carries out the reaction Mg(2+)(out) + phosphate(in) + ATP(out) = Mg(2+)(in) + phosphate(out) + ATP(in). The enzyme catalyses ADP(out) + phosphate(in) + H(+)(out) = ADP(in) + phosphate(out) + H(+)(in). Calcium-independent ATP-Mg/Pi exchanger that catalyzes the electroneutral exchange of Mg-ATP or free ADP against an hydrogenphosphate and participates in the net transport of adenine nucleotides across the mitochondria inner membrane. This Bos taurus (Bovine) protein is Mitochondrial carrier protein SCaMC-3L.